Here is a 697-residue protein sequence, read N- to C-terminus: Elongation factor G (697 aa).

Residues 10–290 form the tr-type G domain; that stretch reads THFRNIGIAA…AVVDYLPSPL (281 aa). GTP is bound by residues 19–26, 89–93, and 143–146; these read AHIDAGKT, DTPGH, and NKMD.

The protein belongs to the TRAFAC class translation factor GTPase superfamily. Classic translation factor GTPase family. EF-G/EF-2 subfamily.

The protein localises to the cytoplasm. Catalyzes the GTP-dependent ribosomal translocation step during translation elongation. During this step, the ribosome changes from the pre-translocational (PRE) to the post-translocational (POST) state as the newly formed A-site-bound peptidyl-tRNA and P-site-bound deacylated tRNA move to the P and E sites, respectively. Catalyzes the coordinated movement of the two tRNA molecules, the mRNA and conformational changes in the ribosome. This Deinococcus deserti (strain DSM 17065 / CIP 109153 / LMG 22923 / VCD115) protein is Elongation factor G.